Reading from the N-terminus, the 194-residue chain is MNISQNPSPNFTYFSDENFINPFMDNNDFSNLMFFDIDEGGNNGLIEEEISSPTSIVSSETFTGESGGSGSATTLSKKESTNRGSKESDQTKETGHRVAFRTRSKIDVMDDGFKWRKYGKKSVKNNINKRNYYKCSSEGCSVKKRVERDGDDAAYVITTYEGVHNHESLSNVYYNEMVLSYDHDNWNQHSLLRS.

Residues 58–97 (SSETFTGESGGSGSATTLSKKESTNRGSKESDQTKETGHR) form a disordered region. A compositionally biased stretch (basic and acidic residues) spans 76–96 (SKKESTNRGSKESDQTKETGH). Residues 104–169 (SKIDVMDDGF…YEGVHNHESL (66 aa)) constitute a DNA-binding region (WRKY).

This sequence belongs to the WRKY group II-c family. Interacts with CAMBP25/VQ15.

The protein localises to the nucleus. Its function is as follows. Transcription factor. Interacts specifically with the W box (5'-(T)TGAC[CT]-3'), a frequently occurring elicitor-responsive cis-acting element. Involved in defense responses. May act as positive regulator of salicylic acid (SA)-mediated signaling and negative regulator of jasmonic acid (JA)-mediated signaling. In Arabidopsis thaliana (Mouse-ear cress), this protein is Probable WRKY transcription factor 51 (WRKY51).